The following is an 856-amino-acid chain: Rab effector MyRIP (856 aa).

In terms of domain architecture, RabBD spans lysine 4–asparagine 124. An FYVE-type zinc finger spans residues cysteine 63–cysteine 105. The segment at arginine 143 to threonine 560 is myosin-binding. The tract at residues valine 193–alanine 209 is PRKAR2A-binding. The segment at leucine 232–glutamine 248 is negative regulation of PRKAR2A-binding. Residues alanine 252–serine 294 are disordered. Serine 299 and serine 351 each carry phosphoserine. 4 disordered regions span residues serine 351–glutamate 578, serine 592–glycine 625, arginine 778–lysine 806, and leucine 826–tyrosine 856. The segment covering isoleucine 395–tyrosine 405 has biased composition (acidic residues). Composition is skewed to low complexity over residues proline 427 to proline 437 and serine 450 to serine 460. The segment at phenylalanine 495–tyrosine 856 is actin-binding. 4 stretches are compositionally biased toward polar residues: residues alanine 551–aspartate 574, glutamine 613–glycine 625, arginine 784–serine 793, and leucine 826–glycine 840.

In terms of assembly, binds RAB27A that has been activated by GTP-binding via its N-terminus. Binds MYO5A, MYO7A and F-actin. Interacts with PRKAR2A. Interacts with components of the exocyst complex, including EXOC3 and EXOC4. In terms of tissue distribution, detected in brain, skin, heart, lung, adrenal medulla, pancreas, intestine, liver, kidney, skeletal muscle and testis. Detected in cochlear and vestibular hair cells in the inner ear, and in photoreceptor and pigment epithelium cells in the retina.

It is found in the cytoplasm. Its subcellular location is the perinuclear region. The protein resides in the cytoplasmic vesicle. It localises to the secretory vesicle. The protein localises to the melanosome. Functionally, rab effector protein involved in melanosome transport. Serves as link between melanosome-bound RAB27A and the motor proteins MYO5A and MYO7A. May link RAB27A-containing vesicles to actin filaments. Functions as a protein kinase A-anchoring protein (AKAP). May act as a scaffolding protein that links PKA to components of the exocytosis machinery, thus facilitating exocytosis, including insulin release. In Mus musculus (Mouse), this protein is Rab effector MyRIP (Myrip).